A 180-amino-acid polypeptide reads, in one-letter code: Protein GrpE (180 aa).

Positions 1-25 (MSKKKAEDKQPIIKDEAVEEPKSDS) are disordered.

It belongs to the GrpE family. In terms of assembly, homodimer.

The protein localises to the cytoplasm. Functionally, participates actively in the response to hyperosmotic and heat shock by preventing the aggregation of stress-denatured proteins, in association with DnaK and GrpE. It is the nucleotide exchange factor for DnaK and may function as a thermosensor. Unfolded proteins bind initially to DnaJ; upon interaction with the DnaJ-bound protein, DnaK hydrolyzes its bound ATP, resulting in the formation of a stable complex. GrpE releases ADP from DnaK; ATP binding to DnaK triggers the release of the substrate protein, thus completing the reaction cycle. Several rounds of ATP-dependent interactions between DnaJ, DnaK and GrpE are required for fully efficient folding. The chain is Protein GrpE from Fructilactobacillus sanfranciscensis (Lactobacillus sanfranciscensis).